The sequence spans 1687 residues: Protein TOPAZ1 (1687 aa).

Disordered regions lie at residues 1-132, 596-632, and 938-969; these read MRRP…PGFD, LSRS…GNLT, and ASEI…GDFS. Over residues 31 to 41 the composition is skewed to gly residues; sequence GAAGGCGPEAG. Residues 80 to 113 are compositionally biased toward basic and acidic residues; that stretch reads RRVEGRRGQVSPSDRRGLEAAKEAEFPLQTERHT. Polar residues-rich tracts occupy residues 598–622 and 948–963; these read RSGS…SLTG and ANTS…SENE.

Its subcellular location is the cytoplasm. The protein resides in the cytosol. In terms of biological role, important for normal spermatogenesis and male fertility. Specifically required for progression to the post-meiotic stages of spermatocyte development. Seems to be necessary for normal expression levels of a number of testis-expressed gene transcripts, although its role in this process is unclear. In Macaca mulatta (Rhesus macaque), this protein is Protein TOPAZ1 (TOPAZ1).